Here is a 189-residue protein sequence, read N- to C-terminus: Potassium-transporting ATPase KdpC subunit (189 aa).

The helical transmembrane segment at 8–28 (LVMLILLTLITGIAYPLLTTG) threads the bilayer.

The protein belongs to the KdpC family. The system is composed of three essential subunits: KdpA, KdpB and KdpC.

It is found in the cell inner membrane. Functionally, part of the high-affinity ATP-driven potassium transport (or Kdp) system, which catalyzes the hydrolysis of ATP coupled with the electrogenic transport of potassium into the cytoplasm. This subunit acts as a catalytic chaperone that increases the ATP-binding affinity of the ATP-hydrolyzing subunit KdpB by the formation of a transient KdpB/KdpC/ATP ternary complex. The polypeptide is Potassium-transporting ATPase KdpC subunit (Serratia proteamaculans (strain 568)).